A 110-amino-acid polypeptide reads, in one-letter code: Nitrogenase-stabilizing/protective protein NifW (110 aa).

This sequence belongs to the NifW family. As to quaternary structure, homotrimer; associates with NifD.

May protect the nitrogenase Fe-Mo protein from oxidative damage. In Acidithiobacillus ferrooxidans (strain ATCC 23270 / DSM 14882 / CIP 104768 / NCIMB 8455) (Ferrobacillus ferrooxidans (strain ATCC 23270)), this protein is Nitrogenase-stabilizing/protective protein NifW.